The following is a 1557-amino-acid chain: Ras guanine nucleotide exchange factor K (1557 aa).

Pro residues predominate over residues Met-1–Pro-16. Disordered stretches follow at residues Met-1–Val-121, Val-146–Val-181, Leu-195–Leu-238, Ser-283–Pro-347, Asn-558–Ser-619, and Thr-881–His-937. Composition is skewed to low complexity over residues Ser-17–Asn-40, Ser-52–Ser-63, Asn-73–Val-90, Ile-102–Ser-114, Thr-148–Thr-161, Leu-195–Ser-207, and Pro-222–Pro-236. Residues Ser-283–Gln-310 show a composition bias toward pro residues. Coiled coils occupy residues Gln-310 to Thr-338 and Asn-591 to Leu-629. Residues Gln-311–Asn-333 are compositionally biased toward low complexity. A compositionally biased stretch (polar residues) spans Glu-334 to Gly-343. 2 stretches are compositionally biased toward low complexity: residues Asn-558–Asn-610 and Thr-881–Thr-928. An N-terminal Ras-GEF domain is found at Leu-1058 to Thr-1177. A disordered region spans residues Pro-1254–Thr-1303. The span at Pro-1261 to Ser-1291 shows a compositional bias: low complexity. Residues Asp-1316–Arg-1549 enclose the Ras-GEF domain.

In terms of biological role, promotes the exchange of Ras-bound GDP by GTP. The polypeptide is Ras guanine nucleotide exchange factor K (gefK) (Dictyostelium discoideum (Social amoeba)).